The chain runs to 314 residues: Mycothiol acetyltransferase (314 aa).

Glu-39 is a 1D-myo-inositol 2-(L-cysteinylamino)-2-deoxy-alpha-D-glucopyranoside binding site. 80–82 (LTA) is a binding site for acetyl-CoA. One can recognise an N-acetyltransferase domain in the interval 159-313 (FVCRRFDPIS…PTGELGHEPP (155 aa)). The 1D-myo-inositol 2-(L-cysteinylamino)-2-deoxy-alpha-D-glucopyranoside site is built by Glu-186, Lys-228, and Glu-237. Residues 241–243 (LGV) and 248–254 (QGQGVGR) contribute to the acetyl-CoA site. 1D-myo-inositol 2-(L-cysteinylamino)-2-deoxy-alpha-D-glucopyranoside is bound at residue Tyr-275.

The protein belongs to the acetyltransferase family. MshD subfamily. In terms of assembly, monomer.

The enzyme catalyses 1D-myo-inositol 2-(L-cysteinylamino)-2-deoxy-alpha-D-glucopyranoside + acetyl-CoA = mycothiol + CoA + H(+). Functionally, catalyzes the transfer of acetyl from acetyl-CoA to desacetylmycothiol (Cys-GlcN-Ins) to form mycothiol. This Jonesia denitrificans (strain ATCC 14870 / DSM 20603 / BCRC 15368 / CIP 55.134 / JCM 11481 / NBRC 15587 / NCTC 10816 / Prevot 55134) (Listeria denitrificans) protein is Mycothiol acetyltransferase.